A 142-amino-acid chain; its full sequence is Large ribosomal subunit protein uL23 (142 aa).

Residue Lys61 forms a Glycyl lysine isopeptide (Lys-Gly) (interchain with G-Cter in SUMO) linkage.

The protein belongs to the universal ribosomal protein uL23 family. As to quaternary structure, component of the large ribosomal subunit (LSU). Mature yeast ribosomes consist of a small (40S) and a large (60S) subunit. The 40S small subunit contains 1 molecule of ribosomal RNA (18S rRNA) and 33 different proteins (encoded by 57 genes). The large 60S subunit contains 3 rRNA molecules (25S, 5.8S and 5S rRNA) and 46 different proteins (encoded by 81 genes). uL23 is associated with the polypeptide exit tunnel.

It localises to the cytoplasm. Functionally, component of the ribosome, a large ribonucleoprotein complex responsible for the synthesis of proteins in the cell. The small ribosomal subunit (SSU) binds messenger RNAs (mRNAs) and translates the encoded message by selecting cognate aminoacyl-transfer RNA (tRNA) molecules. The large subunit (LSU) contains the ribosomal catalytic site termed the peptidyl transferase center (PTC), which catalyzes the formation of peptide bonds, thereby polymerizing the amino acids delivered by tRNAs into a polypeptide chain. The nascent polypeptides leave the ribosome through a tunnel in the LSU and interact with protein factors that function in enzymatic processing, targeting, and the membrane insertion of nascent chains at the exit of the ribosomal tunnel. uL23 is a major component of the universal docking site for these factors at the polypeptide exit tunnel. This chain is Large ribosomal subunit protein uL23, found in Saccharomyces cerevisiae (strain ATCC 204508 / S288c) (Baker's yeast).